A 472-amino-acid chain; its full sequence is Chitobiosyldiphosphodolichol beta-mannosyltransferase (472 aa).

The Lumenal portion of the chain corresponds to 1–20; that stretch reads MEEFQFIKYKGFDHVFKYSG. The chain crosses the membrane as a helical span at residues 21 to 41; that stretch reads PWLWWLVGFYLCLPILAYTLL. Topologically, residues 42–118 are cytoplasmic; sequence PYLTMNGTIS…PITVTKNTSN (77 aa). Residues 119–139 constitute an intramembrane region (helical); the sequence is LPFILFAAKKMVVQFFQLLKL. At 140–472 the chain is on the cytoplasmic side; it reads LSDFRGTDYV…MGKRFEYSTD (333 aa).

The protein belongs to the glycosyltransferase group 1 family.

The protein localises to the endoplasmic reticulum membrane. It carries out the reaction an N,N'-diacetylchitobiosyl-diphospho-di-trans,poly-cis-dolichol + GDP-alpha-D-mannose = a beta-D-Man-(1-&gt;4)-beta-D-GlcNAc-(1-&gt;4)-alpha-D-GlcNAc-diphospho-di-trans,poly-cis-dolichol + GDP + H(+). It functions in the pathway protein modification; protein glycosylation. Its function is as follows. Participates in the formation of the lipid-linked precursor oligosaccharide for N-glycosylation. Involved in assembling the dolichol-pyrophosphate-GlcNAc(2)-Man(5) intermediate on the cytoplasmic surface of the ER. This is Chitobiosyldiphosphodolichol beta-mannosyltransferase (ALG1) from Debaryomyces hansenii (strain ATCC 36239 / CBS 767 / BCRC 21394 / JCM 1990 / NBRC 0083 / IGC 2968) (Yeast).